The chain runs to 96 residues: Keratin-associated protein 12-1 (96 aa).

14 tandem repeats follow at residues 10-14 (CQPAC), 15-19 (CAPSP), 24-28 (CYIPV), 30-34 (CQSSV), 35-39 (CVPVS), 45-49 (CVPVR), 50-54 (CQSSV), 55-59 (CVPVS), 60-64 (CRPVV), 70-74 (CQSSG), 75-79 (CCQPS), 80-84 (CTSVL), 85-89 (CRPIS), and 90-94 (CSTPS). The tract at residues 10–94 (CQPACCAPSP…CRPISCSTPS (85 aa)) is 14 X 5 AA approximate repeats.

The protein belongs to the KRTAP type 12 family. In terms of assembly, interacts with hair keratins. As to expression, restricted to a narrow region of the hair fiber cuticle, lying approximately 20 cell layers above the apex of the dermal papilla of the hair root; not detected in any other tissues.

Functionally, in the hair cortex, hair keratin intermediate filaments are embedded in an interfilamentous matrix, consisting of hair keratin-associated proteins (KRTAP), which are essential for the formation of a rigid and resistant hair shaft through their extensive disulfide bond cross-linking with abundant cysteine residues of hair keratins. The matrix proteins include the high-sulfur and high-glycine-tyrosine keratins. The chain is Keratin-associated protein 12-1 (KRTAP12-1) from Homo sapiens (Human).